The sequence spans 404 residues: Cysteine desulfurase IscS (404 aa).

Residues 75 to 76 (AT), N155, Q183, and 203 to 205 (SGH) contribute to the pyridoxal 5'-phosphate site. K206 carries the post-translational modification N6-(pyridoxal phosphate)lysine. T243 lines the pyridoxal 5'-phosphate pocket. The Cysteine persulfide intermediate role is filled by C328. C328 serves as a coordination point for [2Fe-2S] cluster.

Belongs to the class-V pyridoxal-phosphate-dependent aminotransferase family. NifS/IscS subfamily. In terms of assembly, homodimer. Forms a heterotetramer with IscU, interacts with other sulfur acceptors. The cofactor is pyridoxal 5'-phosphate.

The protein localises to the cytoplasm. It carries out the reaction (sulfur carrier)-H + L-cysteine = (sulfur carrier)-SH + L-alanine. Its pathway is cofactor biosynthesis; iron-sulfur cluster biosynthesis. Master enzyme that delivers sulfur to a number of partners involved in Fe-S cluster assembly, tRNA modification or cofactor biosynthesis. Catalyzes the removal of elemental sulfur and selenium atoms from cysteine and selenocysteine to produce alanine. Functions as a sulfur delivery protein for Fe-S cluster synthesis onto IscU, an Fe-S scaffold assembly protein, as well as other S acceptor proteins. Also functions as a selenium delivery protein in the pathway for the biosynthesis of selenophosphate. This is Cysteine desulfurase IscS from Salmonella typhi.